Reading from the N-terminus, the 519-residue chain is Membrane protein insertase YidC (519 aa).

A run of 6 helical transmembrane segments spans residues 6-26 (ILFVTLSAFTVFIWYFFFAQP), 298-318 (VDFGFFGFLGKIAFSILVFFY), 324-344 (YGWAIIMLTTIIQILVLPLTL), 390-410 (LGGCLPMLLQLPIFWAFFTML), 434-454 (FMQFGSFNLNLLPLMMGIGMF), and 471-491 (IMYIMPVIFTFMFWSFPSGLV).

It belongs to the OXA1/ALB3/YidC family. Type 1 subfamily. Interacts with the Sec translocase complex via SecD. Specifically interacts with transmembrane segments of nascent integral membrane proteins during membrane integration.

The protein resides in the cell inner membrane. Functionally, required for the insertion and/or proper folding and/or complex formation of integral membrane proteins into the membrane. Involved in integration of membrane proteins that insert both dependently and independently of the Sec translocase complex, as well as at least some lipoproteins. Aids folding of multispanning membrane proteins. The protein is Membrane protein insertase YidC of Endomicrobium trichonymphae.